A 128-amino-acid polypeptide reads, in one-letter code: Sulfurtransferase TusD (128 aa).

Catalysis depends on Cys78, which acts as the Cysteine persulfide intermediate.

The protein belongs to the DsrE/TusD family. As to quaternary structure, heterohexamer, formed by a dimer of trimers. The hexameric TusBCD complex contains 2 copies each of TusB, TusC and TusD. The TusBCD complex interacts with TusE.

It is found in the cytoplasm. Part of a sulfur-relay system required for 2-thiolation of 5-methylaminomethyl-2-thiouridine (mnm(5)s(2)U) at tRNA wobble positions. Accepts sulfur from TusA and transfers it in turn to TusE. This is Sulfurtransferase TusD from Salmonella dublin (strain CT_02021853).